The primary structure comprises 436 residues: 3-ketoacyl-CoA thiolase (436 aa).

Cysteine 99 acts as the Acyl-thioester intermediate in catalysis. Catalysis depends on proton acceptor residues histidine 392 and cysteine 422.

Belongs to the thiolase-like superfamily. Thiolase family. In terms of assembly, heterotetramer of two alpha chains (FadJ) and two beta chains (FadI).

It is found in the cytoplasm. It carries out the reaction an acyl-CoA + acetyl-CoA = a 3-oxoacyl-CoA + CoA. Its pathway is lipid metabolism; fatty acid beta-oxidation. In terms of biological role, catalyzes the final step of fatty acid oxidation in which acetyl-CoA is released and the CoA ester of a fatty acid two carbons shorter is formed. The sequence is that of 3-ketoacyl-CoA thiolase from Yersinia pseudotuberculosis serotype O:1b (strain IP 31758).